We begin with the raw amino-acid sequence, 445 residues long: C4-dicarboxylate transport protein 2 (445 aa).

8 helical membrane passes run 24-44 (ILYV…WLFP), 62-82 (LIKM…IAHI), 96-116 (LVYF…VGNL), 163-183 (GDIL…MALG), 201-221 (FGVI…AMAF), 237-257 (LIAL…GLIA), 334-354 (ALGV…AMLT), and 366-386 (FITL…GMAI).

This sequence belongs to the dicarboxylate/amino acid:cation symporter (DAACS) (TC 2.A.23) family.

The protein resides in the cell inner membrane. In terms of biological role, responsible for the transport of dicarboxylates such as succinate, fumarate, and malate from the periplasm across the membrane. The sequence is that of C4-dicarboxylate transport protein 2 from Bradyrhizobium sp. (strain ORS 278).